The sequence spans 580 residues: PTS system fructose-specific EIIB'BC component (580 aa).

PTS EIIB type-2 domains are found at residues 3-100 and 124-221; these read MKIA…QAAE and KKIV…NAFA. Active-site phosphocysteine intermediate; for EIIB activity residues include cysteine 11 and cysteine 132. Residues cysteine 11 and cysteine 132 each carry the phosphocysteine; by EIIA modification. Residues 244 to 579 enclose the PTS EIIC type-2 domain; it reads VYKHLMTGVS…KKSAQAKAVA (336 aa). 9 helical membrane-spanning segments follow: residues 254-274, 292-312, 322-342, 367-387, 408-428, 448-468, 480-500, 507-527, and 537-557; these read HMLPVVVAGGLIIALSFVFGI, GGSAFALMIPVLAGYIAFSIA, IGGMLASSTGAGFLGGIVAGF, ILIIPFIASLFTGLVMIYVVG, NAILLGIVLGAMMCFDLGGPV, MAAIMAAGMVPALGMGLATFI, AGKASFVLGLCFISEGAIPFA, VIPACMVGGAVTGALSMLFGA, and FVLLIPNAISPVLLYLVAIAV.

The protein localises to the cell inner membrane. It catalyses the reaction D-fructose(out) + N(pros)-phospho-L-histidyl-[protein] = D-fructose 1-phosphate(in) + L-histidyl-[protein]. In terms of biological role, the phosphoenolpyruvate-dependent sugar phosphotransferase system (sugar PTS), a major carbohydrate active transport system, catalyzes the phosphorylation of incoming sugar substrates concomitantly with their translocation across the cell membrane. The enzyme II FruAB PTS system is involved in fructose transport. In Vibrio cholerae serotype O1 (strain ATCC 39315 / El Tor Inaba N16961), this protein is PTS system fructose-specific EIIB'BC component.